Reading from the N-terminus, the 1823-residue chain is Bromodomain-containing protein DDB_G0280777 (1823 aa).

2 disordered regions span residues 44 to 83 (DNNNNKRFNENGNQINQIDFNSNKEEEKEEKEEKEKEEDE) and 200 to 281 (LKQT…RTTS). Over residues 65–77 (SNKEEEKEEKEEK) the composition is skewed to basic and acidic residues. Residues 210-224 (KRRNQQHQNLLKKQK) show a composition bias toward basic residues. The span at 225–250 (IQKEKEEREQKEKEQKEKEQKEKEEQ) shows a compositional bias: basic and acidic residues. The span at 251 to 262 (QQQLFLLQQQQQ) shows a compositional bias: low complexity. In terms of domain architecture, Bromo spans 306–413 (EAQEEMYDQL…KKSKDLMKNV (108 aa)). Disordered stretches follow at residues 429 to 654 (ENKN…EEQT), 753 to 781 (NCNNNNNNNDNNNNNNIDNDNDNNNNNSL), 855 to 886 (INDNDDDNNNNNNNNNNNNNNNNNNNNNNNKP), 949 to 993 (NSSK…DEDF), 1055 to 1079 (LPNNKSTTTQTTPTTQLQPPPPPPS), 1190 to 1386 (IDPK…IQAS), 1453 to 1477 (QLQQQTRQPSQPQTPQMQSQPQTPQ), and 1679 to 1823 (QQQQ…QKKQ). Composition is skewed to low complexity over residues 432-486 (NNNN…NTPL), 494-511 (CSPSTISTVSSTPTTPQS), 520-555 (QQQQQQQTQAQQQPTSNSPRNTTTTTTTITSPISPR), and 570-579 (SSSSLSSSSL). Residues 580–590 (ALNSQNENGVN) show a composition bias toward polar residues. The span at 601-614 (MESEESTNVKKEEN) shows a compositional bias: basic and acidic residues. Positions 631-643 (EGEEQQEQEDEEQ) are enriched in acidic residues. Composition is skewed to low complexity over residues 753–779 (NCNNNNNNNDNNNNNNIDNDNDNNNNN), 863–884 (NNNNNNNNNNNNNNNNNNNNNN), 949–958 (NSSKSNNNSN), 1055–1071 (LPNNKSTTTQTTPTTQL), and 1205–1378 (NNNN…NNNN). Positions 1679-1705 (QQQQPQQQQQQPQQQPQQQPQQQQQPQ) are enriched in low complexity. Composition is skewed to basic and acidic residues over residues 1716–1737 (PKEKDKEREKEKEREREKEKDR) and 1744–1755 (KTESKKESKKSL). Composition is skewed to low complexity over residues 1756 to 1767 (NDSSNSDINTSV) and 1789 to 1806 (SSKQPQTTQSNTTTTQDS). Basic residues predominate over residues 1813–1823 (KKKRGRPQKKQ).

In Dictyostelium discoideum (Social amoeba), this protein is Bromodomain-containing protein DDB_G0280777.